The chain runs to 238 residues: uncharacterized protein (238 aa).

The next 7 membrane-spanning stretches (helical) occupy residues 15 to 37, 50 to 69, 79 to 96, 101 to 118, 128 to 150, 163 to 183, and 203 to 225; these read FGAL…VLLP, ARAG…CGTL, LPFH…LYFI, IFFN…VAVL, ILYA…FSLL, CAVL…RRLG, and FFVY…YLPF.

Its subcellular location is the cell membrane. This is an uncharacterized protein from Treponema pallidum (strain Nichols).